The chain runs to 495 residues: Maintenance of mitochondrial morphology protein 1 (495 aa).

Over 1-22 (MALQQHEPAPFAPQSSLSFTQG) the chain is Lumenal. The helical transmembrane segment at 23 to 43 (FLLGQLSVVLLIGAFIKFFIF) threads the bilayer. Over 44–495 (GEAPPPPSRG…PVGTPGIPDN (452 aa)) the chain is Cytoplasmic. Disordered stretches follow at residues 63–94 (YSSV…PSTS), 269–320 (ASTE…SPKS), 382–428 (WPRM…EPEG), and 440–495 (GLGA…IPDN). Polar residues-rich tracts occupy residues 65–74 (SVYSPPQDSQ) and 82–94 (STSN…PSTS). In terms of domain architecture, SMP-LTD spans 128-379 (QPESLDWFNV…EPRVQVVGLP (252 aa)). Over residues 271–289 (TEPPEPLQTPAGSPAPPTS) the composition is skewed to pro residues. Over residues 418-428 (FSDDHGREPEG) the composition is skewed to basic and acidic residues. A compositionally biased stretch (polar residues) spans 458-469 (RSSSMTRQQSGG).

Belongs to the MMM1 family. As to quaternary structure, homodimer. Component of the ER-mitochondria encounter structure (ERMES) or MDM complex, composed of mmm1, mdm10, mdm12 and mdm34. An MMM1 homodimer associates with one molecule of mdm12 on each side in a pairwise head-to-tail manner, and the SMP-LTD domains of mmm1 and mdm12 generate a continuous hydrophobic tunnel for phospholipid trafficking.

Its subcellular location is the endoplasmic reticulum membrane. Functionally, component of the ERMES/MDM complex, which serves as a molecular tether to connect the endoplasmic reticulum (ER) and mitochondria. Components of this complex are involved in the control of mitochondrial shape and protein biogenesis, and function in nonvesicular lipid trafficking between the ER and mitochondria. The mdm12-mmm1 subcomplex functions in the major beta-barrel assembly pathway that is responsible for biogenesis of all outer membrane beta-barrel proteins, and acts in a late step after the SAM complex. The mdm10-mdm12-mmm1 subcomplex further acts in the TOM40-specific pathway after the action of the mdm12-mmm1 complex. Essential for establishing and maintaining the structure of mitochondria and maintenance of mtDNA nucleoids. The polypeptide is Maintenance of mitochondrial morphology protein 1 (Penicillium rubens (strain ATCC 28089 / DSM 1075 / NRRL 1951 / Wisconsin 54-1255) (Penicillium chrysogenum)).